The sequence spans 219 residues: Histone H1.4 (219 aa).

The span at 1 to 15 shows a compositional bias: low complexity; sequence MSETAPAAPAAPAPA. The segment at 1–41 is disordered; the sequence is MSETAPAAPAAPAPAEKTPVKKKARKSAGAAKRKASGPPVS. Position 2 is an N-acetylserine (serine 2). Position 2 is a phosphoserine (serine 2). Position 17 is an N6-acetyllysine (lysine 17). Threonine 18 is modified (phosphothreonine). The segment covering 20-35 has biased composition (basic residues); it reads VKKKARKSAGAAKRKA. N6-acetyllysine; alternate is present on lysine 26. At lysine 26 the chain carries N6-methyllysine; alternate. N6-(beta-hydroxybutyryl)lysine; alternate is present on lysine 34. Lysine 34 carries the post-translational modification N6-succinyllysine; alternate. Serine 36 is modified (phosphoserine). Positions 36–109 constitute an H15 domain; it reads SGPPVSELIT…GASGSFKLNK (74 aa). Lysine 52 carries the post-translational modification N6-(beta-hydroxybutyryl)lysine. The residue at position 54 (arginine 54) is a Citrulline. Residues lysine 64, lysine 85, lysine 90, and lysine 106 each carry the N6-(beta-hydroxybutyryl)lysine modification. Residues 92-219 form a disordered region; the sequence is TLVQTKGTGA…KPKKAAAKKK (128 aa). The segment covering 119 to 140 has biased composition (basic residues); sequence KAKKAGAAKAKKPAGAAKKPKK. At threonine 146 the chain carries Phosphothreonine. 2 stretches are compositionally biased toward basic residues: residues 149–160 and 168–185; these read KSAKKTPKKAKK and KKAKSPKKAKAAKPKKAP. Serine 150 carries the ADP-ribosylserine modification. Serine 187 carries the phosphoserine modification. The segment covering 192 to 219 has biased composition (basic residues); the sequence is KAVKPKAAKPKTAKPKAAKPKKAAAKKK.

The protein belongs to the histone H1/H5 family. Post-translationally, H1 histones are progressively phosphorylated during the cell cycle, becoming maximally phosphorylated during late G2 phase and M phase, and being dephosphorylated sharply thereafter. Acetylated at Lys-26. Deacetylated at Lys-26 by SIRT1. In terms of processing, citrullination at Arg-54 (H1R54ci) by PADI4 takes place within the DNA-binding site of H1 and results in its displacement from chromatin and global chromatin decondensation, thereby promoting pluripotency and stem cell maintenance. Post-translationally, ADP-ribosylated on Ser-150 in response to DNA damage.

It is found in the nucleus. It localises to the chromosome. In terms of biological role, histone H1 protein binds to linker DNA between nucleosomes forming the macromolecular structure known as the chromatin fiber. Histones H1 are necessary for the condensation of nucleosome chains into higher-order structured fibers. Also acts as a regulator of individual gene transcription through chromatin remodeling, nucleosome spacing and DNA methylation. The chain is Histone H1.4 from Homo sapiens (Human).